A 427-amino-acid chain; its full sequence is MTDTNLDILSLTDPAIAGILQKELQRQRDHLELIASENFTSAAVMAAQGSVLTNKYAEGLPKKRYYGGCEYIDEAEQLAIDRVKRLFGANHANVQPHSGAQANFAVFLTLLQPGDTIMGMDLSHGGHLTHGSPVNVSGKWFRVVQYGVSPESERLDYDLILDIARKEKPKLIICGYSAYSRQIDFEKFRAIADEVGAYLMADIAHIAGLVATGHHPNPLPHCDVVTTTTHKTLRGPRGGLIMTKDEELGKKFDKSVFPGTQGGPLEHVVAAKAVAFGEALKPEFKIYSGQVIANAQALAGQLKARGIKIVTDGTDNHLMLLDLRSVGMTGKEADRLVSTINITANKNTVPFDPESPFVTSGLRLGSPAMTTRGLGETEFIEIGNIIADILLNPGDEALRTACRQRVAKLCESFPLYPHLHISVPALA.

Residues Leu-122 and 126–128 (GHL) each bind (6S)-5,6,7,8-tetrahydrofolate. N6-(pyridoxal phosphate)lysine is present on Lys-231. Residues Glu-247 and 355-357 (SPF) contribute to the (6S)-5,6,7,8-tetrahydrofolate site.

Belongs to the SHMT family. Homodimer. Requires pyridoxal 5'-phosphate as cofactor.

The protein resides in the cytoplasm. The enzyme catalyses (6R)-5,10-methylene-5,6,7,8-tetrahydrofolate + glycine + H2O = (6S)-5,6,7,8-tetrahydrofolate + L-serine. It functions in the pathway one-carbon metabolism; tetrahydrofolate interconversion. The protein operates within amino-acid biosynthesis; glycine biosynthesis; glycine from L-serine: step 1/1. Its function is as follows. Catalyzes the reversible interconversion of serine and glycine with tetrahydrofolate (THF) serving as the one-carbon carrier. This reaction serves as the major source of one-carbon groups required for the biosynthesis of purines, thymidylate, methionine, and other important biomolecules. Also exhibits THF-independent aldolase activity toward beta-hydroxyamino acids, producing glycine and aldehydes, via a retro-aldol mechanism. The chain is Serine hydroxymethyltransferase from Microcystis aeruginosa (strain NIES-843 / IAM M-2473).